A 395-amino-acid polypeptide reads, in one-letter code: S-adenosylmethionine synthase (395 aa).

His-19 lines the ATP pocket. Asp-21 contributes to the Mg(2+) binding site. Glu-47 is a K(+) binding site. The L-methionine site is built by Glu-60 and Gln-103. The flexible loop stretch occupies residues 103–113 (QSPDIAQGVNS). ATP contacts are provided by residues 170 to 172 (DNK), 236 to 237 (KF), Asp-245, 251 to 252 (RK), Ala-268, and Lys-272. Asp-245 serves as a coordination point for L-methionine. Lys-276 contacts L-methionine.

Belongs to the AdoMet synthase family. Homotetramer; dimer of dimers. Mg(2+) is required as a cofactor. The cofactor is K(+).

The protein localises to the cytoplasm. The enzyme catalyses L-methionine + ATP + H2O = S-adenosyl-L-methionine + phosphate + diphosphate. Its pathway is amino-acid biosynthesis; S-adenosyl-L-methionine biosynthesis; S-adenosyl-L-methionine from L-methionine: step 1/1. Its function is as follows. Catalyzes the formation of S-adenosylmethionine (AdoMet) from methionine and ATP. The overall synthetic reaction is composed of two sequential steps, AdoMet formation and the subsequent tripolyphosphate hydrolysis which occurs prior to release of AdoMet from the enzyme. The polypeptide is S-adenosylmethionine synthase (Rhodopirellula baltica (strain DSM 10527 / NCIMB 13988 / SH1)).